A 384-amino-acid polypeptide reads, in one-letter code: CDP-diacylglycerol--serine O-phosphatidyltransferase (384 aa).

It belongs to the CDP-alcohol phosphatidyltransferase class-I family.

It is found in the membrane. It carries out the reaction a CDP-1,2-diacyl-sn-glycerol + L-serine = a 1,2-diacyl-sn-glycero-3-phospho-L-serine + CMP + H(+). It functions in the pathway phospholipid metabolism; phosphatidylethanolamine biosynthesis; phosphatidylethanolamine from CDP-diacylglycerol: step 1/2. In Encephalitozoon cuniculi (strain GB-M1) (Microsporidian parasite), this protein is CDP-diacylglycerol--serine O-phosphatidyltransferase (PSS).